The chain runs to 182 residues: Auxin-responsive protein IAA9 (182 aa).

Positions 1–41 (MELELGLAPPNSGHLVVDELSSSSSSGGGSGSAPVSASSAG) are disordered. The EAR-like (transcriptional repression) motif lies at 3–7 (LELGL). The segment covering 32 to 41 (SAPVSASSAG) has biased composition (low complexity). Residues 92–182 (ANYVKVKKEG…RSVKRLKILG (91 aa)) enclose the PB1 domain.

This sequence belongs to the Aux/IAA family. As to quaternary structure, homodimers and heterodimers. Expressed in etiolated shoots and flowers.

It localises to the nucleus. Functionally, aux/IAA proteins are short-lived transcriptional factors that function as repressors of early auxin response genes at low auxin concentrations. The polypeptide is Auxin-responsive protein IAA9 (IAA9) (Oryza sativa subsp. japonica (Rice)).